The chain runs to 813 residues: Protein translocase subunit SecA 2 (813 aa).

Residues glutamine 105, 123–127 (GEGKT), and aspartate 525 each bind ATP.

Belongs to the SecA family. As to quaternary structure, monomer and homodimer. Part of the essential Sec protein translocation apparatus which comprises SecA, SecYEG and auxiliary proteins SecDF-YajC and YidC.

It localises to the cell inner membrane. Its subcellular location is the cytoplasm. It carries out the reaction ATP + H2O + cellular proteinSide 1 = ADP + phosphate + cellular proteinSide 2.. Functionally, part of the Sec protein translocase complex. Interacts with the SecYEG preprotein conducting channel. Has a central role in coupling the hydrolysis of ATP to the transfer of proteins into and across the cell membrane, serving both as a receptor for the preprotein-SecB complex and as an ATP-driven molecular motor driving the stepwise translocation of polypeptide chains across the membrane. The chain is Protein translocase subunit SecA 2 from Rhodopseudomonas palustris (strain BisA53).